The sequence spans 292 residues: Probable 2-(5''-triphosphoribosyl)-3'-dephosphocoenzyme-A synthase (292 aa).

The protein belongs to the CitG/MdcB family.

The enzyme catalyses 3'-dephospho-CoA + ATP = 2'-(5''-triphospho-alpha-D-ribosyl)-3'-dephospho-CoA + adenine. In Shigella flexneri serotype 5b (strain 8401), this protein is Probable 2-(5''-triphosphoribosyl)-3'-dephosphocoenzyme-A synthase.